A 537-amino-acid chain; its full sequence is CTP synthase (537 aa).

The tract at residues 1–267 is amidoligase domain; it reads MTNTKFVFVT…ISVLEERLFG (267 aa). CTP is bound at residue S15. S15 lines the UTP pocket. 16–21 contributes to the ATP binding site; sequence SVGKGI. Y56 provides a ligand contact to L-glutamine. D73 contacts ATP. 2 residues coordinate Mg(2+): D73 and E141. CTP-binding positions include 148–150, 188–193, and K224; these read DIE and KTKPTQ. UTP-binding positions include 188–193 and K224; that span reads KTKPTQ. One can recognise a Glutamine amidotransferase type-1 domain in the interval 297–535; that stretch reads YVVLPDAYLS…LSEAVAKASP (239 aa). G355 lines the L-glutamine pocket. The active-site Nucleophile; for glutamine hydrolysis is the C382. L-glutamine is bound by residues 383–386, E406, and R463; that span reads LGMQ. Catalysis depends on residues H508 and E510.

It belongs to the CTP synthase family. Homotetramer.

It carries out the reaction UTP + L-glutamine + ATP + H2O = CTP + L-glutamate + ADP + phosphate + 2 H(+). The catalysed reaction is L-glutamine + H2O = L-glutamate + NH4(+). The enzyme catalyses UTP + NH4(+) + ATP = CTP + ADP + phosphate + 2 H(+). The protein operates within pyrimidine metabolism; CTP biosynthesis via de novo pathway; CTP from UDP: step 2/2. Its activity is regulated as follows. Allosterically activated by GTP, when glutamine is the substrate; GTP has no effect on the reaction when ammonia is the substrate. The allosteric effector GTP functions by stabilizing the protein conformation that binds the tetrahedral intermediate(s) formed during glutamine hydrolysis. Inhibited by the product CTP, via allosteric rather than competitive inhibition. Functionally, catalyzes the ATP-dependent amination of UTP to CTP with either L-glutamine or ammonia as the source of nitrogen. Regulates intracellular CTP levels through interactions with the four ribonucleotide triphosphates. The protein is CTP synthase of Coprothermobacter proteolyticus (strain ATCC 35245 / DSM 5265 / OCM 4 / BT).